The sequence spans 417 residues: UDP-N-acetylglucosamine 1-carboxyvinyltransferase (417 aa).

Position 22 to 23 (22 to 23) interacts with phosphoenolpyruvate; the sequence is KN. Residue arginine 92 participates in UDP-N-acetyl-alpha-D-glucosamine binding. Catalysis depends on cysteine 116, which acts as the Proton donor. Cysteine 116 carries the post-translational modification 2-(S-cysteinyl)pyruvic acid O-phosphothioketal. Residues aspartate 304 and isoleucine 326 each coordinate UDP-N-acetyl-alpha-D-glucosamine.

Belongs to the EPSP synthase family. MurA subfamily.

It is found in the cytoplasm. It carries out the reaction phosphoenolpyruvate + UDP-N-acetyl-alpha-D-glucosamine = UDP-N-acetyl-3-O-(1-carboxyvinyl)-alpha-D-glucosamine + phosphate. It functions in the pathway cell wall biogenesis; peptidoglycan biosynthesis. Its function is as follows. Cell wall formation. Adds enolpyruvyl to UDP-N-acetylglucosamine. The chain is UDP-N-acetylglucosamine 1-carboxyvinyltransferase from Geotalea daltonii (strain DSM 22248 / JCM 15807 / FRC-32) (Geobacter daltonii).